The following is a 207-amino-acid chain: Probable isochorismatase (207 aa).

It belongs to the isochorismatase family.

The catalysed reaction is isochorismate + H2O = (2S,3S)-2,3-dihydroxy-2,3-dihydrobenzoate + pyruvate. Its pathway is antibiotic biosynthesis; phenazine biosynthesis. In terms of biological role, involved in the biosynthesis of the antibiotic phenazine, a nitrogen-containing heterocyclic molecule having important roles in virulence, competition and biological control. This isochorismatase may remove pyruvate from chorismate during the formation of the phenazine ring structure and/or stabilize the phenazine biosynthetic complex. The protein is Probable isochorismatase (phzA) of Pseudomonas chlororaphis (Pseudomonas aureofaciens).